Reading from the N-terminus, the 272-residue chain is Diaminopimelate epimerase (272 aa).

Positions 11 and 63 each coordinate substrate. The active-site Proton donor is the Cys72. Residues 73-74 (GN), Asn190, and 208-209 (ER) each bind substrate. The Proton acceptor role is filled by Cys217. 218-219 (GT) is a substrate binding site.

This sequence belongs to the diaminopimelate epimerase family. As to quaternary structure, homodimer.

The protein localises to the cytoplasm. The catalysed reaction is (2S,6S)-2,6-diaminopimelate = meso-2,6-diaminopimelate. The protein operates within amino-acid biosynthesis; L-lysine biosynthesis via DAP pathway; DL-2,6-diaminopimelate from LL-2,6-diaminopimelate: step 1/1. Its function is as follows. Catalyzes the stereoinversion of LL-2,6-diaminopimelate (L,L-DAP) to meso-diaminopimelate (meso-DAP), a precursor of L-lysine and an essential component of the bacterial peptidoglycan. The chain is Diaminopimelate epimerase from Clostridium perfringens (strain 13 / Type A).